Here is a 538-residue protein sequence, read N- to C-terminus: Putative cysteine ligase BshC (538 aa).

Positions 248–268 form a coiled coil; it reads ISKYKEVQEGLRNQQEVIKEL.

It belongs to the BshC family.

In terms of biological role, involved in bacillithiol (BSH) biosynthesis. May catalyze the last step of the pathway, the addition of cysteine to glucosamine malate (GlcN-Mal) to generate BSH. The protein is Putative cysteine ligase BshC of Bacillus cereus (strain ATCC 14579 / DSM 31 / CCUG 7414 / JCM 2152 / NBRC 15305 / NCIMB 9373 / NCTC 2599 / NRRL B-3711).